The following is a 132-amino-acid chain: Vesicle transport protein GOT1A (132 aa).

Residues 1–16 (MISITEWQKIGVGTTG) lie on the Cytoplasmic side of the membrane. A helical membrane pass occupies residues 17-37 (FGIFFILFGMLLYFDSVLLAF). Over 38-39 (GN) the chain is Lumenal. Residues 40-60 (LLFLTGLSLIIGLRRTFSFFF) traverse the membrane as a helical segment. Over 61 to 68 (QRHKFKGT) the chain is Cytoplasmic. A helical membrane pass occupies residues 69-89 (SFFLGGVVIVLLRWPLLGMCL). Over 90-100 (ETYGFFSLFRG) the chain is Lumenal. The helical transmembrane segment at 101–121 (FFPVAFGFLGSASNIPFLSAL) threads the bilayer. Topologically, residues 122-132 (FQRLQGTSSMV) are cytoplasmic.

Belongs to the GOT1 family.

The protein localises to the golgi apparatus membrane. In terms of biological role, may be involved in fusion of ER-derived transport vesicles with the Golgi complex. The polypeptide is Vesicle transport protein GOT1A (Bos taurus (Bovine)).